Reading from the N-terminus, the 108-residue chain is Tetrahydromethanopterin S-methyltransferase subunit B (108 aa).

The helical transmembrane segment at 81-101 (FFGFWISLSILTLGLILVIGL) threads the bilayer.

Belongs to the MtrB family. As to quaternary structure, the complex is composed of 8 subunits; MtrA, MtrB, MtrC, MtrD, MtrE, MtrF, MtrG and MtrH.

It localises to the cell membrane. The catalysed reaction is 5-methyl-5,6,7,8-tetrahydromethanopterin + coenzyme M + 2 Na(+)(in) = 5,6,7,8-tetrahydromethanopterin + methyl-coenzyme M + 2 Na(+)(out). It functions in the pathway one-carbon metabolism; methanogenesis from CO(2); methyl-coenzyme M from 5,10-methylene-5,6,7,8-tetrahydromethanopterin: step 2/2. Functionally, part of a complex that catalyzes the formation of methyl-coenzyme M and tetrahydromethanopterin from coenzyme M and methyl-tetrahydromethanopterin. This is an energy-conserving, sodium-ion translocating step. The chain is Tetrahydromethanopterin S-methyltransferase subunit B from Methanococcus aeolicus (strain ATCC BAA-1280 / DSM 17508 / OCM 812 / Nankai-3).